The sequence spans 112 residues: Large ribosomal subunit protein eL31 (112 aa).

The protein belongs to the eukaryotic ribosomal protein eL31 family. As to quaternary structure, component of the large ribosomal subunit. Mature ribosomes consist of a small (40S) and a large (60S) subunit. The 40S subunit contains about 32 different proteins and 1 molecule of RNA (18S). The 60S subunit contains 45 different proteins and 3 molecules of RNA (25S, 5.8S and 5S).

The protein localises to the cytoplasm. In terms of biological role, component of the ribosome, a large ribonucleoprotein complex responsible for the synthesis of proteins in the cell. The small ribosomal subunit (SSU) binds messenger RNAs (mRNAs) and translates the encoded message by selecting cognate aminoacyl-transfer RNA (tRNA) molecules. The large subunit (LSU) contains the ribosomal catalytic site termed the peptidyl transferase center (PTC), which catalyzes the formation of peptide bonds, thereby polymerizing the amino acids delivered by tRNAs into a polypeptide chain. The nascent polypeptides leave the ribosome through a tunnel in the LSU and interact with protein factors that function in enzymatic processing, targeting, and the membrane insertion of nascent chains at the exit of the ribosomal tunnel. This chain is Large ribosomal subunit protein eL31, found in Candida albicans (strain SC5314 / ATCC MYA-2876) (Yeast).